A 258-amino-acid chain; its full sequence is Phycoerythrobilin:ferredoxin oxidoreductase (258 aa).

Belongs to the HY2 family.

The catalysed reaction is (3Z)-phycoerythrobilin + oxidized 2[4Fe-4S]-[ferredoxin] = 15,16-dihydrobiliverdin + reduced 2[4Fe-4S]-[ferredoxin] + 2 H(+). Its function is as follows. Catalyzes the two-electron reduction of the C2 and C3(1) diene system of 15,16-dihydrobiliverdin. This Prochlorococcus marinus (strain NATL1A) protein is Phycoerythrobilin:ferredoxin oxidoreductase.